Here is a 2167-residue protein sequence, read N- to C-terminus: MVIVTRGDYIWIEPASGREFDVAIGARVVSAEGRRIQVRDDDGDEVWLAPERRIKAMHASSVQGVEDMISLGDLHEAGILRNLLIRYKENLIYTYTGSILVAVNPYQILPIYTGDQIKLYKERKIGELPPHIFAIGDNAYAHMKRYRQDQCIVISGESGAGKTESTKLILQYLAAISGKHSWIEQQILEANPILEAFGNAKTIRNDNSSRFGKYIDIHFSANGVIEGAKIEQYLLEKSRIVSQNHSERNYHVFYCILAGLSADEKSRLDLGMAADYKYLTGGNSITCEGRDDAAEFSDIRSAMKVLLFSDQEIWEIIKLLAALLHCGNIKYKATVVDNLDATEIPEHINVERVAGLLGLPIQPLIDALTRRTLFAHGETVVSTLSRDQSVDVRDAFVKGIYGRMFVHIVRKINTAIFKPRGTSRNAIGVLDIFGFENFDQNSFEQFCINYANENLQQFFVQHIFKLEQEEYNHEAINWQHIEFVDNQDALDLIAIKQLNIMALIDEEARFPKGTDQTMLAKLHKTHGSHKNYLKPKSDINTSFGLNHFAGVVFYDTRGFLDKNRDTFSPDLLHLVSQSTNKFLRQIFAQDIEMGAETRKRTPTLSTQFRKSLDALMKTLSSCQPFFIRCIKPNELKKPMMFDRGLCCRQLRYSGMMETIRIRRAGYPIRHGFREFVERYRFLIPGVPPAHRTDCQAATSRICAVVLGKSDYQLGHTKVFLKDAHDLFLEQERDRVLTRKILILQRSIRGWVYRRRFLRLRAAAITVQRFWKGYAQRKRYRNMRVGYMRLQALIRSRVLSHRFRHLRGHIVGLQAHARGYLVRREYGHKMWAVIKIQSHVRRMIAMRRYRKLRLEHKQFAEVLQLRKLEEQELLHRGNKHAREIAEQHYRDRLHELERREIQEQLENRRRVEVNMNIINDAARKQEEPVDDGKLVEAMFDFLPDSSSDAPTPHGGRETSVFNDLPHAQNVNQDDIIAPIHISEDEEDLSEFKFQKFAATYFQGNVNHQYAKKALKHPLLPLHTQGDQLAAQALWITILRFTGDMPEPKYHTMDRMDTTSVMSKVTATLGRNFIRSKEFQEAQLMGLDPDAFLKQKPRSIRHKLVSLTLKRKNKLGEDVRRRLQDDEYTADSYQSWLQSRPTSNLEKLHFIIGHGILRAELRDEIYCQICKQLTNNPLKSSHARGWILLSLCVGCFAPSEKFVNYLRAFIREGPPGYAPYCEERLKRTFNNGTRNQPPSWLELQATKSKKPIMLPITFMDGNTKTLLADSATTARELCNQLSDKISLKDQFGFSLYIALFDKVSSLGSGGDHVMDAISQCEQYAKEQGAQERNAPWRLFFRKEIFAPWHEPTHDQVATNLIYQQVVRGVKFGEYRCDKEEDLAMIAAQQYFIEYSTDMSMERLFTLLPNFIPDFCLSGVDKAIERWAALVLQAYKKSYYVKDKIAPLKIKEDIVSYAKYKWPLLFSRFYEAYRNSGPNLPKNDVIIAVNWTGVYVVDDQEQVLLELSFPEITAVSSQKTNKVFTQTFSLSTVRGEEFTFQSPNAEDIRDLVVYFLDGLKKRSKYVIALQDYRAPSDGTSFLSFFKGDLIILEDESCGESVLNNGWCIGRCDRSQERGDFPAETVYVLPTLSKPPQDILALFNIEEAHHGRRLSMASNGGAVEPRDRPHTLMEYALDHFRLPPKRTMSKTLTLSSKRSEELWRYSRDPIKAPLLRKLQSKEEFAEEACFAFAAILKYMGDLPSKRPRMGNEITDHIFDGPLKHEILRDEIYCQLMKQLTDNRNRMSEERGWELMWLATGLFACSQGLLKELLLFLRTRRHPISQDSMHRLQKTIRHGQRKYPPHQVEVEAIQHKTTQIFHKVYFPDDTDEAFEVDSSTRAKDFCNNISQRLSLRTSEGFSLFVKIADKVISVPEGDFFFDFVRHLTDWIKKARPIRDGANPQFTYQVFFMKKLWTNTVPGKDRNADLIFHYHQELPKLLRGYHKCSREEAAKLAALVFRVRFGENKQELQAIPQMLRELIPSDIMKIQSTSEWKRSIVASYNQDGGMTSEDAKVAFLKIVYRWPTFGSAFFEVKQTTEPNYPEMLLIAINKHGVSLIHPVTKDILVTHPFTRISNWSSGNTYFHMTIGNLVRGSKLLCETSLGYKMDDLLTSYISLMLTNMNKNRTIRAN.

A Myosin motor domain is found at 63–733 (QGVEDMISLG…HDLFLEQERD (671 aa)). 156–163 (GESGAGKT) serves as a coordination point for ATP. 2 actin-binding regions span residues 612 to 634 (LDAL…KPNE) and 712 to 726 (QLGH…AHDL). IQ domains follow at residues 736-758 (LTRK…RFLR), 759-788 (LRAA…GYMR), 805-827 (LRGH…EYGH), and 828-857 (KMWA…EHKQ). The stretch at 886–919 (QHYRDRLHELERREIQEQLENRRRVEVNMNIIND) forms a coiled coil. A MyTH4 1 domain is found at 1008 to 1245 (YAKKALKHPL…PSWLELQATK (238 aa)). Residues 1250 to 1560 (IMLPITFMDG…YFLDGLKKRS (311 aa)) form the FERM 1 domain. Residues 1558–1627 (KRSKYVIALQ…PAETVYVLPT (70 aa)) form the SH3 domain. Ser-1651 and Ser-1654 each carry phosphoserine. Positions 1701–1849 (YSRDPIKAPL…PHQVEVEAIQ (149 aa)) constitute a MyTH4 2 domain. In terms of domain architecture, FERM 2 spans 1855 to 2158 (IFHKVYFPDD…SYISLMLTNM (304 aa)). Position 2045 is a phosphothreonine (Thr-2045).

Belongs to the TRAFAC class myosin-kinesin ATPase superfamily. Myosin family. In terms of assembly, homodimerizes in a two headed molecule through the formation of a coiled-coil rod. Homodimers motility is approximately 8-10 times slower than that of myosin V, and its step size is 30 nm, which is consistent with the presence of five IQ motifs in its neck region. Interacts with Cad99C (via the cytoplasmic domain). Interacts with zip and Sans. As to expression, expressed in the setae, micro- and macrochaetae on the head, thorax and wing.

It is found in the cytoplasm. Its subcellular location is the cell cortex. The protein localises to the cell projection. It localises to the microvillus. In terms of biological role, myosins are actin-based motor molecules with ATPase activity. Unconventional myosins serve in intracellular movements: can function in cells as a single-molecule cargo transporter. A very slow and high-duty-ratio motor, may be suitable for tension maintenance of actin filaments. Their highly divergent tails are presumed to bind to membranous compartments, which would be moved relative to actin filaments. Plays a key role in the formation of cellular projections and other actin-based functions required for embryonic and larval viability. Necessary for auditory transduction: plays a role in Johnston's organ organization by functioning in scolopidial apical attachment and therefore to acoustic stimulus propagation from the antenna a2/a3 joint to transducing elements. Interaction with the myosin zip may be important for its function in scolopidial apical attachment. During oogenesis it has Cad99c-dependent and Cad99c-independent roles in regulating the shape and spacing of the follicle cell microvilli which secrete eggshell material such as the vitelline membrane. May be required for the normal expression of Cad99c in the follicle cell microvilli. The chain is Myosin-VIIa from Drosophila melanogaster (Fruit fly).